Consider the following 424-residue polypeptide: uncharacterized protein (424 aa).

This is an uncharacterized protein from Orgyia pseudotsugata (Douglas-fir tussock moth).